The primary structure comprises 204 residues: Cold and drought-regulated protein CORA (204 aa).

A run of 18 repeats spans residues 54–59 (YNHGGG), 65–70 (YNHGGG), 71–76 (YNHGGG), 78–83 (YHNGGG), 85–90 (YNHGGG), 98–100 (HGG), 101–103 (HGG), 112–114 (HGG), 115–117 (HGG), 126–128 (HGG), 129–131 (HGG), 164–169 (YNHGGG), 171–176 (YNHGGG), 178–180 (HGG), 181–183 (HGG), 184–186 (HGG), 187–189 (HGG), and 190–192 (HGG). The 7 X 6 AA repeats of Y-N-H-G-G-G stretch occupies residues 54-176 (YNHGGGYNGG…GGGGYNHGGG (123 aa)). The segment at 98-192 (HGGHGGGGYN…GHGGHGGHGG (95 aa)) is 11 X 3 AA repeats of H-G-G. The segment covering 169–194 (GGYNHGGGGHGGHGGHGGHGGHGGHG) has biased composition (gly residues). A disordered region spans residues 169–204 (GGYNHGGGGHGGHGGHGGHGGHGGHGAVQTEDNTQN).

This sequence belongs to the GRP family.

May be involved in resistance of the plant to environmental stress. This is Cold and drought-regulated protein CORA (CORA) from Medicago sativa (Alfalfa).